The primary structure comprises 145 residues: MDTPVYLYTDGACKGNPGAGGWGVLMRYGSHEKELFGGEAQTTNNRMELTAVIEGLKSLKRRCTVIICTDSQYVKNGMENWIHGWKRNGWKTAAKQPVKNDDLWKELDTLVGQHQVSWTWVKGHAGHAENERADDLANRGAAQFS.

Residues 1 to 142 (MDTPVYLYTD…ADDLANRGAA (142 aa)) enclose the RNase H type-1 domain. Positions 10, 48, 70, and 134 each coordinate Mg(2+).

Belongs to the RNase H family. In terms of assembly, monomer. It depends on Mg(2+) as a cofactor.

The protein resides in the cytoplasm. It carries out the reaction Endonucleolytic cleavage to 5'-phosphomonoester.. Endonuclease that specifically degrades the RNA of RNA-DNA hybrids. The chain is Ribonuclease H from Neisseria meningitidis serogroup C / serotype 2a (strain ATCC 700532 / DSM 15464 / FAM18).